The following is a 168-amino-acid chain: Large ribosomal subunit protein uL16 (168 aa).

It belongs to the universal ribosomal protein uL16 family.

The protein is Large ribosomal subunit protein uL16 of Thermofilum pendens (strain DSM 2475 / Hrk 5).